We begin with the raw amino-acid sequence, 439 residues long: Thymidine phosphorylase (439 aa).

The protein belongs to the thymidine/pyrimidine-nucleoside phosphorylase family. Homodimer.

The enzyme catalyses thymidine + phosphate = 2-deoxy-alpha-D-ribose 1-phosphate + thymine. The protein operates within pyrimidine metabolism; dTMP biosynthesis via salvage pathway; dTMP from thymine: step 1/2. The enzymes which catalyze the reversible phosphorolysis of pyrimidine nucleosides are involved in the degradation of these compounds and in their utilization as carbon and energy sources, or in the rescue of pyrimidine bases for nucleotide synthesis. In Mesorhizobium japonicum (strain LMG 29417 / CECT 9101 / MAFF 303099) (Mesorhizobium loti (strain MAFF 303099)), this protein is Thymidine phosphorylase.